Reading from the N-terminus, the 581-residue chain is uncharacterized protein (581 aa).

Positions 1-28 (MDSKAVSPLIGFVLMLAIIMGLIGIMQA) are cleaved as a signal peptide.

This is an uncharacterized protein from Archaeoglobus fulgidus (strain ATCC 49558 / DSM 4304 / JCM 9628 / NBRC 100126 / VC-16).